Here is a 499-residue protein sequence, read N- to C-terminus: Patatin-like protein 6 (499 aa).

The region spanning 111-314 is the PNPLA domain; the sequence is LSIDSGGMRG…AMSNPTAAAI (204 aa). The GGXR motif lies at 116 to 119; that stretch reads GGMR. Catalysis depends on Ser-155, which acts as the Nucleophile. Catalysis depends on Asp-301, which acts as the Proton acceptor. The DGA/G motif lies at 301–303; the sequence is DGG.

This sequence belongs to the patatin family. As to expression, highly expressed in siliques and at lower levels in roots and flowers.

Its function is as follows. Possesses non-specific lipolytic acyl hydrolase (LAH) activity. Hydrolyzes phospholipids as well as galactolipids. May play a role in disease resistance. The chain is Patatin-like protein 6 (PLP6) from Arabidopsis thaliana (Mouse-ear cress).